The following is a 293-amino-acid chain: Elongation factor Ts (293 aa).

The segment at 80-83 (TDFV) is involved in Mg(2+) ion dislocation from EF-Tu.

Belongs to the EF-Ts family.

It localises to the cytoplasm. Functionally, associates with the EF-Tu.GDP complex and induces the exchange of GDP to GTP. It remains bound to the aminoacyl-tRNA.EF-Tu.GTP complex up to the GTP hydrolysis stage on the ribosome. The chain is Elongation factor Ts from Aeromonas hydrophila subsp. hydrophila (strain ATCC 7966 / DSM 30187 / BCRC 13018 / CCUG 14551 / JCM 1027 / KCTC 2358 / NCIMB 9240 / NCTC 8049).